The sequence spans 132 residues: Small ribosomal subunit protein uS8 (132 aa).

It belongs to the universal ribosomal protein uS8 family. As to quaternary structure, part of the 30S ribosomal subunit. Contacts proteins S5 and S12.

One of the primary rRNA binding proteins, it binds directly to 16S rRNA central domain where it helps coordinate assembly of the platform of the 30S subunit. This is Small ribosomal subunit protein uS8 from Aliarcobacter butzleri (strain RM4018) (Arcobacter butzleri).